The sequence spans 292 residues: DCN1-like protein 4 (292 aa).

Residues 43 to 83 (HQTGSLRSCSSSDCFNKVMPPRKKRRPASGDDLSAKKSRHD) form a disordered region. Over residues 45–56 (TGSLRSCSSSDC) the composition is skewed to polar residues. Lysine 95 participates in a covalent cross-link: Glycyl lysine isopeptide (Lys-Gly) (interchain with G-Cter in SUMO2). The 187-residue stretch at 101–287 (FSSKRCLEWF…LLDEFVEWYK (187 aa)) folds into the DCUN1 domain.

Interacts (via the DCUN1 domain) with the unneddylated cullins: interacts with CUL1, CUL2, CUL3, CUL4A, CUL4B and CUL5; these interactions promote the cullin neddylation and the identity of the cullin dictates the affinity of the interaction. Interacts with RBX1 and RNF7. Interacts with CAND1; this interaction is bridged by cullins such as CUL3 and strongly inhibits the neddylation of CUL3. These CAND-cullin-DCNL complexes can only be neddylated in the presence of a substrate adapter. Interacts (via DCUN1 domain) with UBE2M (N-terminally acetylated form) and probably with UBE2F (N-terminally acetylated form).

It localises to the nucleus. Contributes to the neddylation of all cullins by transferring NEDD8 from N-terminally acetylated NEDD8-conjugating E2s enzyme to different cullin C-terminal domain-RBX complexes which are necessary for the activation of cullin-RING E3 ubiquitin ligases (CRLs). The sequence is that of DCN1-like protein 4 from Homo sapiens (Human).